The primary structure comprises 277 residues: Phosphatidylglycerol--prolipoprotein diacylglyceryl transferase (277 aa).

A run of 4 helical transmembrane segments spans residues 18–38 (ISVK…LLLA), 51–71 (IIVD…RIYY), 89–109 (IWHG…TAII), and 116–136 (ISFW…QAIG). Residue Arg-137 participates in a 1,2-diacyl-sn-glycero-3-phospho-(1'-sn-glycerol) binding. A run of 3 helical transmembrane segments spans residues 177 to 197 (QPTF…LLII), 205 to 225 (GELF…IEGM), and 235 to 255 (FRVS…IIIY).

This sequence belongs to the Lgt family.

The protein localises to the cell membrane. The catalysed reaction is L-cysteinyl-[prolipoprotein] + a 1,2-diacyl-sn-glycero-3-phospho-(1'-sn-glycerol) = an S-1,2-diacyl-sn-glyceryl-L-cysteinyl-[prolipoprotein] + sn-glycerol 1-phosphate + H(+). The protein operates within protein modification; lipoprotein biosynthesis (diacylglyceryl transfer). In terms of biological role, catalyzes the transfer of the diacylglyceryl group from phosphatidylglycerol to the sulfhydryl group of the N-terminal cysteine of a prolipoprotein, the first step in the formation of mature lipoproteins. This is Phosphatidylglycerol--prolipoprotein diacylglyceryl transferase from Listeria monocytogenes serotype 4a (strain HCC23).